The chain runs to 125 residues: N-alpha-acetyltransferase 38, NatC auxiliary subunit (125 aa).

The disordered stretch occupies residues 1 to 42; that stretch reads MAGAGPTMLLREENGCCSRRQSSSSAGDSDGEQEDSPATRAR. Position 2 is an N-acetylalanine (alanine 2). Low complexity predominate over residues 18-28; it reads SRRQSSSSAGD. A phosphoserine mark is found at serine 22, serine 25, and serine 29. A Sm domain is found at 40 to 118; the sequence is RARQQLEALL…IVSIEVQRES (79 aa).

It belongs to the snRNP Sm proteins family. In terms of assembly, component of the N-terminal acetyltransferase C (NatC) complex, which is composed of NAA35, NAA38 and NAA30.

The protein localises to the cytoplasm. Its subcellular location is the nucleus. In terms of biological role, auxillary component of the N-terminal acetyltransferase C (NatC) complex which catalyzes acetylation of N-terminal methionine residues. N-terminal acetylation protects proteins from ubiquitination and degradation by the N-end rule pathway. The protein is N-alpha-acetyltransferase 38, NatC auxiliary subunit (Naa38) of Mus musculus (Mouse).